The chain runs to 185 residues: Putative manganese efflux pump MntP (185 aa).

A run of 6 helical transmembrane segments spans residues L8 to L28, I42 to F62, I66 to L86, M103 to L123, I137 to L157, and K165 to M185.

This sequence belongs to the MntP (TC 9.B.29) family.

The protein resides in the cell membrane. Its function is as follows. Probably functions as a manganese efflux pump. This chain is Putative manganese efflux pump MntP, found in Clostridium novyi (strain NT).